Reading from the N-terminus, the 715-residue chain is Polyribonucleotide nucleotidyltransferase (715 aa).

Asp-500 and Asp-506 together coordinate Mg(2+). One can recognise a KH domain in the interval 567-634 (PKVKMIRINP…AYIESLVREA (68 aa)). In terms of domain architecture, S1 motif spans 637–712 (GELYEAKVTR…ERGRVDLSRK (76 aa)).

The protein belongs to the polyribonucleotide nucleotidyltransferase family. Mg(2+) is required as a cofactor.

It is found in the cytoplasm. The enzyme catalyses RNA(n+1) + phosphate = RNA(n) + a ribonucleoside 5'-diphosphate. Functionally, involved in mRNA degradation. Catalyzes the phosphorolysis of single-stranded polyribonucleotides processively in the 3'- to 5'-direction. This is Polyribonucleotide nucleotidyltransferase from Acholeplasma laidlawii (strain PG-8A).